Consider the following 392-residue polypeptide: Probable glycerol-3-phosphate dehydrogenase 2 (392 aa).

NAD(+)-binding positions include 42 to 47 (GSGNWG), F130, K153, and A196. K153 is a substrate binding site. The active-site Proton acceptor is the K248. R312 and Q341 together coordinate NAD(+). Position 312–313 (312–313 (RN)) interacts with substrate.

The protein belongs to the NAD-dependent glycerol-3-phosphate dehydrogenase family. In terms of assembly, homodimer.

The protein localises to the cytoplasm. The catalysed reaction is sn-glycerol 3-phosphate + NAD(+) = dihydroxyacetone phosphate + NADH + H(+). In Caenorhabditis elegans, this protein is Probable glycerol-3-phosphate dehydrogenase 2 (gpdh-2).